A 537-amino-acid chain; its full sequence is Protein swallow (537 aa).

The segment at Q344–D406 is disordered. Composition is skewed to low complexity over residues N371 to S383 and A392 to D406.

In terms of assembly, may be constituted of a homo- or heterodimer.

The protein resides in the nucleus. In terms of biological role, has a role in localizing bicoid mRNA at the anterior margin of the oocyte during oogenesis, and a poorly characterized role in nuclear divisions in early embryogenesis. The protein is Protein swallow (swa) of Drosophila pseudoobscura pseudoobscura (Fruit fly).